Consider the following 173-residue polypeptide: Acetyl-CoA decarbonylase/synthase complex subunit epsilon (173 aa).

It belongs to the CdhB family. As to quaternary structure, heterotetramer of two alpha and two epsilon subunits. The ACDS complex is made up of alpha, epsilon, beta, gamma and delta subunits with a probable stoichiometry of (alpha(2)epsilon(2))(4)-beta(8)-(gamma(1)delta(1))(8).

It functions in the pathway one-carbon metabolism; methanogenesis from acetate. Part of a complex that catalyzes the reversible cleavage of acetyl-CoA, allowing growth on acetate as sole source of carbon and energy. The alpha-epsilon subcomponent functions as a carbon monoxide dehydrogenase. The precise role of the epsilon subunit is unclear; it may have a stabilizing role within the alpha(2)epsilon(2) component and/or be involved in electron transfer to FAD during a potential FAD-mediated CO oxidation. The protein is Acetyl-CoA decarbonylase/synthase complex subunit epsilon of Methanothermobacter thermautotrophicus (strain ATCC 29096 / DSM 1053 / JCM 10044 / NBRC 100330 / Delta H) (Methanobacterium thermoautotrophicum).